The sequence spans 80 residues: Acyl carrier protein (80 aa).

One can recognise a Carrier domain in the interval 4–79; it reads DATLEKVRSI…DAVKYIEDKQ (76 aa). The residue at position 39 (S39) is an O-(pantetheine 4'-phosphoryl)serine.

The protein belongs to the acyl carrier protein (ACP) family. Post-translationally, 4'-phosphopantetheine is transferred from CoA to a specific serine of apo-ACP by AcpS. This modification is essential for activity because fatty acids are bound in thioester linkage to the sulfhydryl of the prosthetic group.

Its subcellular location is the cytoplasm. The protein operates within lipid metabolism; fatty acid biosynthesis. Functionally, carrier of the growing fatty acid chain in fatty acid biosynthesis. This chain is Acyl carrier protein, found in Prochlorococcus marinus (strain MIT 9211).